A 199-amino-acid chain; its full sequence is N-(5'-phosphoribosyl)anthranilate isomerase (199 aa).

It belongs to the TrpF family.

It catalyses the reaction N-(5-phospho-beta-D-ribosyl)anthranilate = 1-(2-carboxyphenylamino)-1-deoxy-D-ribulose 5-phosphate. Its pathway is amino-acid biosynthesis; L-tryptophan biosynthesis; L-tryptophan from chorismate: step 3/5. The sequence is that of N-(5'-phosphoribosyl)anthranilate isomerase from Streptococcus pneumoniae serotype 4 (strain ATCC BAA-334 / TIGR4).